Here is a 482-residue protein sequence, read N- to C-terminus: Capsule synthesis positive regulator AcpB (482 aa).

PRD domains are found at residues 165-270 (PFEK…YKDI) and 283-395 (EGNL…YTSN).

This sequence belongs to the AtxA/AcpA family.

Functionally, acpB and AcpA regulate cap gene expression and capsule synthesis. The sequence is that of Capsule synthesis positive regulator AcpB (acpB) from Bacillus anthracis.